Reading from the N-terminus, the 117-residue chain is Large ribosomal subunit protein bL20 (117 aa).

This sequence belongs to the bacterial ribosomal protein bL20 family.

Functionally, binds directly to 23S ribosomal RNA and is necessary for the in vitro assembly process of the 50S ribosomal subunit. It is not involved in the protein synthesizing functions of that subunit. This Mesomycoplasma hyopneumoniae (strain 232) (Mycoplasma hyopneumoniae) protein is Large ribosomal subunit protein bL20.